The primary structure comprises 332 residues: Pyrroline-5-carboxylate reductase (332 aa).

The protein belongs to the pyrroline-5-carboxylate reductase family.

It carries out the reaction L-proline + NADP(+) = (S)-1-pyrroline-5-carboxylate + NADPH + 2 H(+). The enzyme catalyses L-proline + NAD(+) = (S)-1-pyrroline-5-carboxylate + NADH + 2 H(+). It participates in amino-acid biosynthesis; L-proline biosynthesis; L-proline from L-glutamate 5-semialdehyde: step 1/1. The protein is Pyrroline-5-carboxylate reductase (pro-1) of Neurospora crassa (strain ATCC 24698 / 74-OR23-1A / CBS 708.71 / DSM 1257 / FGSC 987).